An 894-amino-acid polypeptide reads, in one-letter code: Transcriptional activator/repressor GIS1 (894 aa).

Positions V12–L53 constitute a JmjN domain. The residue at position 70 (S70) is a Phosphoserine. The stretch at E90 to L110 forms a coiled coil. In terms of domain architecture, JmjC spans P170–C324. A Bipartite nuclear localization signal motif is present at residues R316 to K332. A disordered region spans residues C324–N355. Residues P335–D354 are compositionally biased toward polar residues. A Phosphoserine modification is found at S343. Positions Q361–N385 form a coiled coil. The segment covering N521–T554 has biased composition (low complexity). The disordered stretch occupies residues N521–G558. S690, S694, S696, S734, and S747 each carry phosphoserine. Positions L756–N768 are enriched in low complexity. The tract at residues L756 to H810 is disordered. Polar residues-rich tracts occupy residues F769 to L785 and Y795 to H810. The segment at Y828–H851 adopts a C2H2-type 1 zinc-finger fold. A C2H2-type 2; atypical zinc finger spans residues H857 to C882.

The protein localises to the nucleus. Functionally, transcription factor involved in the regulation of gene expression upon nutrient starvation. Recognizes and binds to the post-diauxic-shift element 5'-T[AT]AGGGAT-3' in the promoter region. Can act as a transcriptional activator (e.g. of stress genes like SSA3, HSP12 and HSP26) as well as a repressor (e.g. of pyrophosphate phosphatase DPP1). GIS1 also acts as a DNA damage-responsive transcriptional repressor of photolyase PHR1. The protein is Transcriptional activator/repressor GIS1 (GIS1) of Saccharomyces cerevisiae (strain ATCC 204508 / S288c) (Baker's yeast).